We begin with the raw amino-acid sequence, 209 residues long: Octanoyltransferase (209 aa).

The BPL/LPL catalytic domain maps to 30-209 (DNEPEIVYLV…IQTEFNKIFK (180 aa)). Residues 69 to 76 (RGGKFTFH), 143 to 145 (AIG), and 156 to 158 (GIA) contribute to the substrate site. Cys-174 acts as the Acyl-thioester intermediate in catalysis.

This sequence belongs to the LipB family.

It localises to the cytoplasm. The catalysed reaction is octanoyl-[ACP] + L-lysyl-[protein] = N(6)-octanoyl-L-lysyl-[protein] + holo-[ACP] + H(+). Its pathway is protein modification; protein lipoylation via endogenous pathway; protein N(6)-(lipoyl)lysine from octanoyl-[acyl-carrier-protein]: step 1/2. Catalyzes the transfer of endogenously produced octanoic acid from octanoyl-acyl-carrier-protein onto the lipoyl domains of lipoate-dependent enzymes. Lipoyl-ACP can also act as a substrate although octanoyl-ACP is likely to be the physiological substrate. This chain is Octanoyltransferase, found in Rickettsia prowazekii (strain Madrid E).